Consider the following 175-residue polypeptide: Type-2 ice-structuring protein (175 aa).

The N-terminal stretch at 1–16 is a signal peptide; the sequence is MLAALLVCAMVALTRA. The propeptide occupies 17 to 33; that stretch reads ANGDTGKEAVMTGSSGK. The region spanning 36-163 is the C-type lectin domain; that stretch reads TECPTDWKMF…LHASVCAKPA (128 aa). 5 disulfides stabilise this stretch: Cys38–Cys49, Cys66–Cys159, Cys103–Cys134, Cys123–Cys145, and Cys135–Cys151.

It localises to the secreted. Functionally, antifreeze proteins lower the blood freezing point. The sequence is that of Type-2 ice-structuring protein from Osmerus mordax (Rainbow smelt).